A 683-amino-acid chain; its full sequence is Synaptic vesicle glycoprotein 2B (683 aa).

Residues 1–10 (MDDYRYRDNY) are compositionally biased toward basic and acidic residues. The segment at 1–72 (MDDYRYRDNY…QTKMAPSRAD (72 aa)) is disordered. The Cytoplasmic segment spans residues 1–110 (MDDYRYRDNY…ECGHGRFQWT (110 aa)). A Phosphoserine modification is found at Ser33. At Thr36 the chain carries Phosphothreonine. The chain crosses the membrane as a helical span at residues 111–131 (LFFVLVLALMADGVEVFVVSF). Residues 132-148 (ALPSAEKDMCLSSSKKG) are Extracellular-facing. Residues 149–169 (MLGLIVYLGMMAGAFILGGLA) traverse the membrane as a helical segment. Over 170–182 (DKLGRKKVLSMSL) the chain is Cytoplasmic. A helical membrane pass occupies residues 183-203 (AINASFASLSSFVQGYGAFLF). At 204–205 (CR) the chain is on the extracellular side. A helical membrane pass occupies residues 206–226 (LISGIGIGGSLPIVFAYFSEF). The Cytoplasmic segment spans residues 227–237 (LSREKRGEHLS). The helical transmembrane segment at 238–258 (WLGIFWMTGGIYASAMAWSII) threads the bilayer. The Extracellular portion of the chain corresponds to 259–277 (PHYGWGFSMGTNYHFHSWR). A helical membrane pass occupies residues 278–298 (VFVIVCALPATVSMVALKFMP). Topologically, residues 299–390 (ESPRFLLEMG…CVMGPYRMNT (92 aa)) are cytoplasmic. Residues 391-411 (LILAVVWFTMALSYYGLTVWF) form a helical membrane-spanning segment. Residues 412–535 (PDMIRYFQDE…CHMDFEEDND (124 aa)) lie on the Extracellular side of the membrane. Position 423 is a phosphotyrosine (Tyr423). 3 N-linked (GlcNAc...) asparagine glycosylation sites follow: Asn441, Asn491, and Asn516. A helical membrane pass occupies residues 536–556 (FLIYLVSFLGSLSVLPGNIIS). Residues 557–565 (ALLMDRIGR) are Cytoplasmic-facing. A helical transmembrane segment spans residues 566–586 (LKMIGGSMLISAVCCFFLFFG). At 587–592 (NSESAM) the chain is on the extracellular side. Residues 593–613 (IGWQCLFCGTSIAAWNALDVI) traverse the membrane as a helical segment. At 614–626 (TVELYPTNQRATA) the chain is on the cytoplasmic side. Residues 627-649 (FGILNGLCKLGAILGNTIFASFV) traverse the membrane as a helical segment. At 650 to 653 (GITK) the chain is on the extracellular side. Residues 654 to 672 (VVPILLAAASLVGGGLVAL) traverse the membrane as a helical segment. At 673–683 (RLPETREQVLM) the chain is on the cytoplasmic side.

Belongs to the major facilitator superfamily. As to quaternary structure, interacts with SYT1 in a calcium-independent manner. Forms a complex with SYT1, syntaxin-1 and SNAP25. (Microbial infection) Interacts with C.botulinum neurotoxin type A1 and type A2 (BoNT/A, botA). Interaction is improved by glycosylation of SV2. In terms of assembly, (Microbial infection) Interacts with C.botulinum neurotoxin type D (BoNT/D, botD). As to quaternary structure, (Microbial infection) Interacts with C.botulinum neurotoxin type E (BoNT/E). Interaction requires glycosylation of SV2 proteins. (Microbial infection) Interacts with C.botulinum neurotoxin type F (BoNT/F). Interaction requires glycosylation of SV2 proteins. N-glycosylated. Post-translationally, the N-terminal cytoplasmic domain is phosphorylated by CK1. Widely expressed throughout the brain. Specifically expressed by pinealocytes in the pineal gland. Also detected in testis (at protein level). Specifically expressed in neural tissues. Expressed in the spinal cord and in all brain regions with a stronger expression in hippocampus and cortex.

It localises to the cytoplasmic vesicle. Its subcellular location is the secretory vesicle. The protein resides in the synaptic vesicle membrane. It is found in the acrosome. Functionally, probably plays a role in the control of regulated secretion in neural and endocrine cells. Its function is as follows. (Microbial infection) Receptor for C.botulinum neurotoxin type A (BoNT/A, botA); the toxin binds via extracellular loop 4. Restores uptake of BoNT/A in mouse and rat cells that are deleted for SV2 receptor. Glycosylation of SV2B is not essential for receptor activity, but enhances the interaction. Also serves as a receptor for the closely related C.botulinum neurotoxin type A2; glycosylation is not essential but enhances the interaction. (Microbial infection) Possible receptor for C.botulinum neurotoxin type D (BoNT/D, botD); BoNT/D does not bind to extracellular loop 4 as do BoNT/A and BoNT/E. Another group does not find a convincing interaction with SV2. In terms of biological role, (Microbial infection) Receptor for C.botulinum neurotoxin type E (BoNT/E); the toxin probably binds via extracellular loop 4. Restores uptake of BoNT/E in mouse cells that are deleted for SV2 receptor. Glycosylation of SV2B is not essential for receptor activity, but enhances the interaction. Functionally, (Microbial infection) Receptor for C.botulinum neurotoxin type F (BoNT/F); binding requires glycosylation of this protein. The protein is Synaptic vesicle glycoprotein 2B (Sv2b) of Rattus norvegicus (Rat).